We begin with the raw amino-acid sequence, 442 residues long: Chaperone protein dnaJ A6, chloroplastic (442 aa).

A chloroplast-targeting transit peptide spans 1–82 (MAIIQLGSTC…PRRGSRFTVR (82 aa)). Residues 86-150 (DYYSVLGVSK…EKKSLYDRYG (65 aa)) enclose the J domain. The CR-type zinc finger occupies 211-292 (GMEKEIEISR…CSGDGRVRKT (82 aa)). Cys-224, Cys-227, Cys-241, Cys-244, Cys-267, Cys-270, Cys-280, and Cys-283 together coordinate Zn(2+). CXXCXGXG motif repeat units follow at residues 224–231 (CGTCEGSG), 241–248 (CTTCGGQG), 267–274 (CSSCNGTG), and 280–287 (CGTCSGDG).

Belongs to the DnaJ family.

It is found in the plastid. Its subcellular location is the chloroplast. In terms of biological role, may function together with HSC70 chaperone to assist protein folding and prevent protein aggregation during heat stress in the chloroplast. This is Chaperone protein dnaJ A6, chloroplastic from Arabidopsis thaliana (Mouse-ear cress).